The sequence spans 213 residues: Elongation factor 1-beta (213 aa).

Low complexity predominate over residues 67–80 (AGKAPAASGSAAAA). A disordered region spans residues 67–88 (AGKAPAASGSAAAAAEEEDDED).

It belongs to the EF-1-beta/EF-1-delta family. In terms of assembly, EF-1 is composed of 4 subunits: alpha, beta, delta, and gamma.

Functionally, EF-1-beta and EF-1-delta stimulate the exchange of GDP bound to EF-1-alpha to GTP. This chain is Elongation factor 1-beta (EFB1), found in Candida albicans (strain WO-1) (Yeast).